The primary structure comprises 71 residues: Disintegrin horridistatin-2 (71 aa).

The Disintegrin domain occupies 1-71 (GEECDCGSPA…ADCPRNGLYG (71 aa)). 6 cysteine pairs are disulfide-bonded: Cys-4/Cys-19, Cys-6/Cys-14, Cys-13/Cys-36, Cys-27/Cys-33, Cys-32/Cys-57, and Cys-45/Cys-64. A Cell attachment site motif is present at residues 49–51 (RGD).

It belongs to the venom metalloproteinase (M12B) family. P-II subfamily. P-IIa sub-subfamily. In terms of assembly, monomer (disintegrin). In terms of tissue distribution, expressed by the venom gland.

It is found in the secreted. In terms of biological role, inhibits ADP-induced platelet aggregation (IC(50) is 16.2 nM) by binding to alpha-IIb/beta-3 (ITGA2B/ITGB3). The protein is Disintegrin horridistatin-2 of Crotalus horridus (Timber rattlesnake).